The primary structure comprises 209 residues: Small ribosomal subunit protein uS3 (209 aa).

Residues 17 to 86 enclose the KH type-2 domain; that stretch reads IDEFLEKELR…NPQIEVEEIK (70 aa).

The protein belongs to the universal ribosomal protein uS3 family. As to quaternary structure, part of the 30S ribosomal subunit.

Functionally, binds the lower part of the 30S subunit head. The chain is Small ribosomal subunit protein uS3 from Thermococcus kodakarensis (strain ATCC BAA-918 / JCM 12380 / KOD1) (Pyrococcus kodakaraensis (strain KOD1)).